Here is a 241-residue protein sequence, read N- to C-terminus: Orotidine 5'-phosphate decarboxylase (241 aa).

Residues D16, K37, 64-73, T128, R190, Q199, G219, and R220 each bind substrate; that span reads DLKFHDIPTT. The Proton donor role is filled by K66.

This sequence belongs to the OMP decarboxylase family. Type 1 subfamily. In terms of assembly, homodimer.

The catalysed reaction is orotidine 5'-phosphate + H(+) = UMP + CO2. It participates in pyrimidine metabolism; UMP biosynthesis via de novo pathway; UMP from orotate: step 2/2. In terms of biological role, catalyzes the decarboxylation of orotidine 5'-monophosphate (OMP) to uridine 5'-monophosphate (UMP). The protein is Orotidine 5'-phosphate decarboxylase of Prochlorococcus marinus (strain NATL1A).